Reading from the N-terminus, the 940-residue chain is Isoleucine--tRNA ligase (940 aa).

A 'HIGH' region motif is present at residues 58-68; the sequence is PYANGSIHIGH. An L-isoleucyl-5'-AMP-binding site is contributed by Glu-564. A 'KMSKS' region motif is present at residues 605–609; the sequence is KMSKS. ATP is bound at residue Lys-608. Residues Cys-903, Cys-906, Cys-923, and Cys-926 each contribute to the Zn(2+) site.

Belongs to the class-I aminoacyl-tRNA synthetase family. IleS type 1 subfamily. In terms of assembly, monomer. It depends on Zn(2+) as a cofactor.

It localises to the cytoplasm. The catalysed reaction is tRNA(Ile) + L-isoleucine + ATP = L-isoleucyl-tRNA(Ile) + AMP + diphosphate. Catalyzes the attachment of isoleucine to tRNA(Ile). As IleRS can inadvertently accommodate and process structurally similar amino acids such as valine, to avoid such errors it has two additional distinct tRNA(Ile)-dependent editing activities. One activity is designated as 'pretransfer' editing and involves the hydrolysis of activated Val-AMP. The other activity is designated 'posttransfer' editing and involves deacylation of mischarged Val-tRNA(Ile). The chain is Isoleucine--tRNA ligase from Shewanella oneidensis (strain ATCC 700550 / JCM 31522 / CIP 106686 / LMG 19005 / NCIMB 14063 / MR-1).